We begin with the raw amino-acid sequence, 155 residues long: uncharacterized protein (155 aa).

A compositionally biased stretch (polar residues) spans 1 to 14 (MLTLSGWITTQVPP). Residues 1 to 44 (MLTLSGWITTQVPPSSRAAADAKAARTGTAEQAEDPAAGTDAAD) are disordered. Low complexity predominate over residues 17–30 (RAAADAKAARTGTA).

This is an uncharacterized protein from Pseudomonas aeruginosa (strain ATCC 15692 / DSM 22644 / CIP 104116 / JCM 14847 / LMG 12228 / 1C / PRS 101 / PAO1).